Reading from the N-terminus, the 140-residue chain is Phosphoribosyl-AMP cyclohydrolase (140 aa).

Asp85 is a Mg(2+) binding site. Cys86 is a Zn(2+) binding site. Mg(2+)-binding residues include Asp87 and Asp89. Zn(2+)-binding residues include Cys102 and Cys109.

This sequence belongs to the PRA-CH family. As to quaternary structure, homodimer. The cofactor is Mg(2+). Zn(2+) is required as a cofactor.

The protein localises to the cytoplasm. The enzyme catalyses 1-(5-phospho-beta-D-ribosyl)-5'-AMP + H2O = 1-(5-phospho-beta-D-ribosyl)-5-[(5-phospho-beta-D-ribosylamino)methylideneamino]imidazole-4-carboxamide. It functions in the pathway amino-acid biosynthesis; L-histidine biosynthesis; L-histidine from 5-phospho-alpha-D-ribose 1-diphosphate: step 3/9. Its function is as follows. Catalyzes the hydrolysis of the adenine ring of phosphoribosyl-AMP. This is Phosphoribosyl-AMP cyclohydrolase from Bradyrhizobium diazoefficiens (strain JCM 10833 / BCRC 13528 / IAM 13628 / NBRC 14792 / USDA 110).